We begin with the raw amino-acid sequence, 404 residues long: Cysteine desulfurase IscS (404 aa).

Pyridoxal 5'-phosphate-binding positions include 75–76 (AT), asparagine 155, glutamine 183, and 203–205 (SGH). Lysine 206 bears the N6-(pyridoxal phosphate)lysine mark. Threonine 243 serves as a coordination point for pyridoxal 5'-phosphate. Catalysis depends on cysteine 328, which acts as the Cysteine persulfide intermediate. [2Fe-2S] cluster is bound at residue cysteine 328.

Belongs to the class-V pyridoxal-phosphate-dependent aminotransferase family. NifS/IscS subfamily. In terms of assembly, homodimer. Forms a heterotetramer with IscU, interacts with other sulfur acceptors. Requires pyridoxal 5'-phosphate as cofactor.

It localises to the cytoplasm. It catalyses the reaction (sulfur carrier)-H + L-cysteine = (sulfur carrier)-SH + L-alanine. Its pathway is cofactor biosynthesis; iron-sulfur cluster biosynthesis. Master enzyme that delivers sulfur to a number of partners involved in Fe-S cluster assembly, tRNA modification or cofactor biosynthesis. Catalyzes the removal of elemental sulfur atoms from cysteine to produce alanine. Functions as a sulfur delivery protein for Fe-S cluster synthesis onto IscU, an Fe-S scaffold assembly protein, as well as other S acceptor proteins. The sequence is that of Cysteine desulfurase IscS from Pectobacterium atrosepticum (strain SCRI 1043 / ATCC BAA-672) (Erwinia carotovora subsp. atroseptica).